The chain runs to 1151 residues: MDQDNNNHNDSNRLHPPDIHPNLGPQLWLNSSGDFDDNNNNNNNNNNNNSTRPQMPSRTRETATSERNASEVRDATLNNIFRFDSIQRETLLPTNNGQPLNQNFSLTFQPQQQTNALNGIDINTVNTNLMNGVNVQIDQLNRLLPNLPEEERKQIHEFKLIVGKKIQEFLVVIEKRRKKILNEIELDNLKLKELRIDNSPQAISYLHKLQRMRLRALETENMEIRNLRLKILTIIEEYKKSLYAYCHSKLRGQQVENPTDNFIIWINSIDTTESSDLKEGLQDLSRYSRQFINNVLSNPSNQNICTSVTRRSPVFALNMLPSEILHLILDKLNQKYDIVKFLTVSKLWAEIIVKILYYRPHINKKSQLDLFLRTMKLTSEETVFNYRLMIKRLNFSFVGDYMHDTELNYFVGCKNLERLTLVFCKHITSVPISAVLRGCKFLQSVDITGIRDVSDDVFDTLATYCPRVQGFYVPQARNVTFDSLRNFIVHSPMLKRIKITANNNMNDELVELLANKCPLLVEVDITLSPNVTDSSLLKLLTRLVQLREFRITHNTNITDNLFQELSKVVDDMPSLRLIDLSGCENITDKTIESIVNLAPKLRNVFLGKCSRITDASLFQLSKLGKNLQTVHFGHCFNITDNGVRALFHSCTRIQYVDFACCTNLTNRTLYELADLPKLKRIGLVKCTQMTDEGLLNMVSLRGRNDTLERVHLSYCSNLTIYPIYELLMSCPRLSHLSLTAVPSFLRPDITMYCRPAPSDFSENQRQIFCVFSGKGVHKLRHYLVNLTSPAFGPHVDVNDVLTKYIRSKNLIFNGETLEDALRRIITDLNQDSAAIIAATGLNQINGLNNDFLFQNINFERIDEVFSWYLNTFDGIRMSSEEVNSLLLQVNKTFCEDPFSDVDDDQDYVVAPGVNREINSEMCHIVRKFHELNDHIDDFEVNVASLVRVQFQFTGFLLHEMTQTYMQMIELNRQICLVQKTVQESGNIDYQKGLLIWRLLFIDKFIMVVQKYKLSTVVLRLYLKDNITLLTRQRELLIAHQRSAWNNNNDNDANRNANNIVNIVSDAGANDTSNNETNNGNDDNETENPNFWRQFGNRMQISPDQMRNLQMGLRNQNMVRNNNNNTIDESMPDTAIDSQMDEASGTPDEDML.

Over residues 1 to 18 (MDQDNNNHNDSNRLHPPD) the composition is skewed to basic and acidic residues. The segment at 1-72 (MDQDNNNHND…ATSERNASEV (72 aa)) is disordered. Positions 38–49 (NNNNNNNNNNNN) are enriched in low complexity. The span at 58–72 (RTRETATSERNASEV) shows a compositional bias: basic and acidic residues. Phosphoserine is present on residues Ser199 and Ser300. The region spanning 314-361 (VFALNMLPSEILHLILDKLNQKYDIVKFLTVSKLWAEIIVKILYYRPH) is the F-box domain. LRR repeat units lie at residues 399–423 (GDYMHDTELNYFVGCKNLERLTLVF), 424–449 (CKHITSVPISAVLRGCKFLQSVDITG), 450–475 (IRDVSDDVFDTLATYCPRVQGFYVPQ), 476–501 (ARNVTFDSLRNFIVHSPMLKRIKITA), 502–527 (NNNMNDELVELLANKCPLLVEVDITL), 528–553 (SPNVTDSSLLKLLTRLVQLREFRITH), 554–582 (NTNITDNLFQELSKVVDDMPSLRLIDLSG), 583–608 (CENITDKTIESIVNLAPKLRNVFLGK), 609–634 (CSRITDASLFQLSKLGKNLQTVHFGH), 635–660 (CFNITDNGVRALFHSCTRIQYVDFAC), 661–685 (CTNLTNRTLYELADLPKLKRIGLVK), 686–714 (CTQMTDEGLLNMVSLRGRNDTLERVHLSY), and 715–740 (CSNLTIYPIYELLMSCPRLSHLSLTA). Positions 1066 to 1080 (AGANDTSNNETNNGN) are enriched in low complexity. Disordered stretches follow at residues 1066 to 1090 (AGANDTSNNETNNGNDDNETENPNF) and 1118 to 1151 (VRNNNNNTIDESMPDTAIDSQMDEASGTPDEDML).

As to quaternary structure, interacts with SKP1. Component of the probable SCF(GRR1) complex containing CDC53, SKP1, RBX1 and GRR1.

It localises to the membrane. Its pathway is protein modification; protein ubiquitination. In terms of biological role, substrate recognition component of a SCF (SKP1-CUL1-F-box protein) E3 ubiquitin-protein ligase complex which mediates the ubiquitination and subsequent proteasomal degradation of target proteins. Recognizes and directs ubiquitination of phosphorylated CLN1, CLN2 and GIC2. Probably constitutes the primary response element required for the generation or interpretation of the signal that induces glucose repression. The polypeptide is SCF E3 ubiquitin ligase complex F-box protein GRR1 (GRR1) (Saccharomyces cerevisiae (strain ATCC 204508 / S288c) (Baker's yeast)).